The chain runs to 317 residues: Aspartate carbamoyltransferase catalytic subunit (317 aa).

Positions 66 and 67 each coordinate carbamoyl phosphate. Residue Lys-94 participates in L-aspartate binding. Arg-116, His-144, and Gln-147 together coordinate carbamoyl phosphate. L-aspartate-binding residues include Arg-177 and Arg-231. Carbamoyl phosphate contacts are provided by Gly-272 and Pro-273.

Belongs to the aspartate/ornithine carbamoyltransferase superfamily. ATCase family. Heterododecamer (2C3:3R2) of six catalytic PyrB chains organized as two trimers (C3), and six regulatory PyrI chains organized as three dimers (R2).

It catalyses the reaction carbamoyl phosphate + L-aspartate = N-carbamoyl-L-aspartate + phosphate + H(+). It functions in the pathway pyrimidine metabolism; UMP biosynthesis via de novo pathway; (S)-dihydroorotate from bicarbonate: step 2/3. Functionally, catalyzes the condensation of carbamoyl phosphate and aspartate to form carbamoyl aspartate and inorganic phosphate, the committed step in the de novo pyrimidine nucleotide biosynthesis pathway. The protein is Aspartate carbamoyltransferase catalytic subunit of Nitrobacter hamburgensis (strain DSM 10229 / NCIMB 13809 / X14).